Consider the following 86-residue polypeptide: RNA-binding protein Hfq (86 aa).

The Sm domain occupies 9-68 (DPYLNTLRKEKVGVSIYLVNGIKLQGTIESFDQFVILLKNTVSQMVYKHAISTVVPVRPI).

It belongs to the Hfq family. Homohexamer.

Functionally, RNA chaperone that binds small regulatory RNA (sRNAs) and mRNAs to facilitate mRNA translational regulation in response to envelope stress, environmental stress and changes in metabolite concentrations. Also binds with high specificity to tRNAs. This Pseudomonas fluorescens (strain ATCC BAA-477 / NRRL B-23932 / Pf-5) protein is RNA-binding protein Hfq.